A 123-amino-acid chain; its full sequence is Fluoride-specific ion channel FluC 2 (123 aa).

Transmembrane regions (helical) follow at residues 30–50 (FPLP…FVAG), 68–88 (VGFI…VLLL), and 93–113 (WPLA…AVWV). Residues glycine 72 and threonine 75 each coordinate Na(+).

The protein belongs to the fluoride channel Fluc/FEX (TC 1.A.43) family.

The protein localises to the cell membrane. It carries out the reaction fluoride(in) = fluoride(out). Na(+) is not transported, but it plays an essential structural role and its presence is essential for fluoride channel function. Its function is as follows. Fluoride-specific ion channel. Important for reducing fluoride concentration in the cell, thus reducing its toxicity. The chain is Fluoride-specific ion channel FluC 2 from Symbiobacterium thermophilum (strain DSM 24528 / JCM 14929 / IAM 14863 / T).